A 419-amino-acid polypeptide reads, in one-letter code: Pregnancy-specific beta-1-glycoprotein 1 (419 aa).

Positions 1-34 are cleaved as a signal peptide; that stretch reads MGTLSAPPCTQRIKWKGLLLTASLLNFWNLPTTA. In terms of domain architecture, Ig-like V-type spans 35-144; the sequence is QVTIEAEPTK…TGRFTFTLHL (110 aa). N-linked (GlcNAc...) asparagine glycans are attached at residues asparagine 61, asparagine 104, asparagine 111, asparagine 199, asparagine 259, asparagine 268, and asparagine 303. 3 consecutive Ig-like C2-type domains span residues 149–234, 240–327, and 335–410; these read PSIS…VTLN, PKPY…VTLN, and PRIY…KSMT. Cysteine 169 and cysteine 217 are disulfide-bonded. 2 disulfides stabilise this stretch: cysteine 262–cysteine 310 and cysteine 354–cysteine 394.

It belongs to the immunoglobulin superfamily. CEA family.

The protein localises to the secreted. The chain is Pregnancy-specific beta-1-glycoprotein 1 (PSG1) from Homo sapiens (Human).